Reading from the N-terminus, the 548-residue chain is Chaperonin GroEL (548 aa).

Residues Thr29–Pro32, Lys50, Asp86–Thr90, Gly414, Asn478–Ala480, and Asp494 each bind ATP.

It belongs to the chaperonin (HSP60) family. In terms of assembly, forms a cylinder of 14 subunits composed of two heptameric rings stacked back-to-back. Interacts with the co-chaperonin GroES.

It is found in the cytoplasm. It carries out the reaction ATP + H2O + a folded polypeptide = ADP + phosphate + an unfolded polypeptide.. Functionally, together with its co-chaperonin GroES, plays an essential role in assisting protein folding. The GroEL-GroES system forms a nano-cage that allows encapsulation of the non-native substrate proteins and provides a physical environment optimized to promote and accelerate protein folding. Its function is as follows. May play a protective role against the defense mechanisms generated by the infected macrophages. The chain is Chaperonin GroEL from Legionella pneumophila.